We begin with the raw amino-acid sequence, 105 residues long: Large ribosomal subunit protein uL24 (105 aa).

This sequence belongs to the universal ribosomal protein uL24 family. As to quaternary structure, part of the 50S ribosomal subunit.

One of two assembly initiator proteins, it binds directly to the 5'-end of the 23S rRNA, where it nucleates assembly of the 50S subunit. Its function is as follows. One of the proteins that surrounds the polypeptide exit tunnel on the outside of the subunit. This is Large ribosomal subunit protein uL24 from Clostridium botulinum (strain 657 / Type Ba4).